The following is a 262-amino-acid chain: MRYQNMFETLKKQDKMAFIPFVTLGDPNYEWSFEIIKTLITSGVSALELGFAFSDPVADGVTIQASHLRALKHASMAKNFQLLRALRDYNPHIPIGLLAYANLIFSYGVDGFYAQIKECGVDSVLIADMPLIEKELVIKSAQKHQIKQIFIASPNASVKDLEQAAMHSQGYIYTLARSGVTGASRILENDASAIIKTLKAFSPTPALLGFGISQKEHIKNAKEMGADGVICGSALVKIIEENLNNENAMLEKIKGFIGGMIF.

Catalysis depends on proton acceptor residues glutamate 48 and aspartate 59.

Belongs to the TrpA family. As to quaternary structure, tetramer of two alpha and two beta chains.

It carries out the reaction (1S,2R)-1-C-(indol-3-yl)glycerol 3-phosphate + L-serine = D-glyceraldehyde 3-phosphate + L-tryptophan + H2O. Its pathway is amino-acid biosynthesis; L-tryptophan biosynthesis; L-tryptophan from chorismate: step 5/5. The alpha subunit is responsible for the aldol cleavage of indoleglycerol phosphate to indole and glyceraldehyde 3-phosphate. This Helicobacter pylori (strain P12) protein is Tryptophan synthase alpha chain.